Reading from the N-terminus, the 816-residue chain is Neuroligin-4, Y-linked (816 aa).

Positions 1–43 (MLRPQGLLWLPLLFTSVCVMLNSNVLLWITALAIKFTLIDSQA) are cleaved as a signal peptide. Residues 44–676 (QYPVVNTNYG…TKRDYSTELS (633 aa)) are Extracellular-facing. N-linked (GlcNAc...) asparagine glycosylation is present at N102. Cystine bridges form between C110–C146 and C306–C317. An interaction with NRXN1 region spans residues 359 to 364 (QGEFLN). Residues C476 and C510 are joined by a disulfide bond. A glycan (N-linked (GlcNAc...) asparagine) is linked at N511. The segment at 636–659 (TKRPAITPANNPKHSKDPHKTGPE) is disordered. Residues 649-658 (HSKDPHKTGP) show a composition bias toward basic and acidic residues. The chain crosses the membrane as a helical span at residues 677 to 697 (VTIAVGASLLFLNILAFAALY). Over 698-816 (YKKDKRRHET…LPHGHSTTRV (119 aa)) the chain is Cytoplasmic. The residue at position 712 (S712) is a Phosphoserine.

It belongs to the type-B carboxylesterase/lipase family. In terms of assembly, homodimer. Interacts with NRXN1 in a calcium-dependent manner. Interaction with neurexins is mediated by heparan sulfate glycan modification on neurexin. Interacts through its C-terminus with DLG4/PSD-95 third PDZ domain. Expressed in fetal and adult brain, prostate and testis.

Its subcellular location is the cell membrane. The protein resides in the postsynaptic density membrane. Cell surface protein involved in cell-cell-interactions via its interactions with neurexin family members. This chain is Neuroligin-4, Y-linked (NLGN4Y), found in Homo sapiens (Human).